An 81-amino-acid chain; its full sequence is ATP synthase subunit c, chloroplastic (81 aa).

A run of 2 helical transmembrane segments spans residues 3–23 (PLIS…ASIG) and 57–77 (LAFM…LLFA).

The protein belongs to the ATPase C chain family. In terms of assembly, F-type ATPases have 2 components, F(1) - the catalytic core - and F(0) - the membrane proton channel. F(1) has five subunits: alpha(3), beta(3), gamma(1), delta(1), epsilon(1). F(0) has four main subunits: a(1), b(1), b'(1) and c(10-14). The alpha and beta chains form an alternating ring which encloses part of the gamma chain. F(1) is attached to F(0) by a central stalk formed by the gamma and epsilon chains, while a peripheral stalk is formed by the delta, b and b' chains.

The protein resides in the plastid. It is found in the chloroplast thylakoid membrane. Its function is as follows. F(1)F(0) ATP synthase produces ATP from ADP in the presence of a proton or sodium gradient. F-type ATPases consist of two structural domains, F(1) containing the extramembraneous catalytic core and F(0) containing the membrane proton channel, linked together by a central stalk and a peripheral stalk. During catalysis, ATP synthesis in the catalytic domain of F(1) is coupled via a rotary mechanism of the central stalk subunits to proton translocation. Key component of the F(0) channel; it plays a direct role in translocation across the membrane. A homomeric c-ring of between 10-14 subunits forms the central stalk rotor element with the F(1) delta and epsilon subunits. The sequence is that of ATP synthase subunit c, chloroplastic from Acorus calamus var. americanus (American sweet flag).